We begin with the raw amino-acid sequence, 366 residues long: Flagellar P-ring protein (366 aa).

A signal peptide spans 1–19; sequence MTLIRLLACLLFLPCLAQA.

The protein belongs to the FlgI family. The basal body constitutes a major portion of the flagellar organelle and consists of four rings (L,P,S, and M) mounted on a central rod.

It localises to the periplasm. The protein resides in the bacterial flagellum basal body. Its function is as follows. Assembles around the rod to form the L-ring and probably protects the motor/basal body from shearing forces during rotation. This Ruegeria pomeroyi (strain ATCC 700808 / DSM 15171 / DSS-3) (Silicibacter pomeroyi) protein is Flagellar P-ring protein.